The sequence spans 140 residues: uncharacterized protein (140 aa).

Tandem repeats lie at residues 1-10 (MFARLCPVSE), 11-20 (TFGRLCPVSE), 21-30 (TFARLCPVSE), 31-40 (TFARLCPVSE), 41-50 (TFARLCPVSE), 51-60 (TFGRLCPVSE), 61-70 (MFGRLSPVSE), 71-80 (TFGRLCPVSE), 81-90 (TFGRLCPVSE), 91-100 (MFARLCPVSE), 101-110 (TFGRLSPVSE), 111-120 (MFGRLCPVSE), 121-130 (MFGRLCPVSE), and 131-140 (MFGRLCPVIT). The interval 1–140 (MFARLCPVSE…MFGRLCPVIT (140 aa)) is 14 X 10 AA tandem repeats of [MT]-F-[AG]-R-L-[CS]-P-V-[SI]-[ET].

This is an uncharacterized protein from Homo sapiens (Human).